A 179-amino-acid chain; its full sequence is Shikimate kinase (179 aa).

12-17 (GVGKSK) is a binding site for ATP. Serine 16 lines the Mg(2+) pocket. Substrate-binding residues include aspartate 34, arginine 61, and glycine 83. Residue arginine 131 participates in ATP binding. Residue arginine 147 participates in substrate binding.

Belongs to the shikimate kinase family. As to quaternary structure, monomer. The cofactor is Mg(2+).

The protein resides in the cytoplasm. The catalysed reaction is shikimate + ATP = 3-phosphoshikimate + ADP + H(+). Its pathway is metabolic intermediate biosynthesis; chorismate biosynthesis; chorismate from D-erythrose 4-phosphate and phosphoenolpyruvate: step 5/7. In terms of biological role, catalyzes the specific phosphorylation of the 3-hydroxyl group of shikimic acid using ATP as a cosubstrate. This is Shikimate kinase from Leptospira borgpetersenii serovar Hardjo-bovis (strain JB197).